A 56-amino-acid polypeptide reads, in one-letter code: Conotoxin reg3.9 (56 aa).

Residues 1-8 (LLFPLSAL) form the signal peptide. The segment at 1–22 (LLFPLSALPLDGDQPADQPAER) is disordered. A propeptide spanning residues 9-40 (PLDGDQPADQPAERMQDISPEQNFWFDLVERG) is cleaved from the precursor. 3 disulfide bridges follow: cysteine 41–cysteine 55, cysteine 42–cysteine 53, and cysteine 47–cysteine 56.

This sequence belongs to the conotoxin M superfamily. As to expression, expressed by the venom duct.

It is found in the secreted. The sequence is that of Conotoxin reg3.9 from Conus regius (Crown cone).